The sequence spans 900 residues: Alanine--tRNA ligase (900 aa).

Residues H567, H571, C671, and H675 each coordinate Zn(2+).

Belongs to the class-II aminoacyl-tRNA synthetase family. Zn(2+) is required as a cofactor.

It localises to the cytoplasm. It carries out the reaction tRNA(Ala) + L-alanine + ATP = L-alanyl-tRNA(Ala) + AMP + diphosphate. Functionally, catalyzes the attachment of alanine to tRNA(Ala) in a two-step reaction: alanine is first activated by ATP to form Ala-AMP and then transferred to the acceptor end of tRNA(Ala). Also edits incorrectly charged Ser-tRNA(Ala) and Gly-tRNA(Ala) via its editing domain. In Mycoplasma pneumoniae (strain ATCC 29342 / M129 / Subtype 1) (Mycoplasmoides pneumoniae), this protein is Alanine--tRNA ligase.